Reading from the N-terminus, the 379-residue chain is Homoserine O-succinyltransferase (379 aa).

Residues 48 to 357 (NAVLICHALS…SAHGHDAFLM (310 aa)) enclose the AB hydrolase-1 domain. Ser-154 functions as the Nucleophile in the catalytic mechanism. Arg-224 contacts substrate. Residues Asp-319 and His-352 contribute to the active site. Position 353 (Asp-353) interacts with substrate.

Belongs to the AB hydrolase superfamily. MetX family. In terms of assembly, homodimer.

It is found in the cytoplasm. It carries out the reaction L-homoserine + succinyl-CoA = O-succinyl-L-homoserine + CoA. The protein operates within amino-acid biosynthesis; L-methionine biosynthesis via de novo pathway; O-succinyl-L-homoserine from L-homoserine: step 1/1. Functionally, transfers a succinyl group from succinyl-CoA to L-homoserine, forming succinyl-L-homoserine. In Neisseria gonorrhoeae (strain ATCC 700825 / FA 1090), this protein is Homoserine O-succinyltransferase.